The chain runs to 440 residues: tRNA(Ile)-lysidine synthase (440 aa).

31-36 (SGGADS) serves as a coordination point for ATP.

It belongs to the tRNA(Ile)-lysidine synthase family.

The protein resides in the cytoplasm. It catalyses the reaction cytidine(34) in tRNA(Ile2) + L-lysine + ATP = lysidine(34) in tRNA(Ile2) + AMP + diphosphate + H(+). In terms of biological role, ligates lysine onto the cytidine present at position 34 of the AUA codon-specific tRNA(Ile) that contains the anticodon CAU, in an ATP-dependent manner. Cytidine is converted to lysidine, thus changing the amino acid specificity of the tRNA from methionine to isoleucine. The polypeptide is tRNA(Ile)-lysidine synthase (Borreliella afzelii (strain PKo) (Borrelia afzelii)).